The sequence spans 503 residues: Probable cytosol aminopeptidase (503 aa).

Positions 270 and 275 each coordinate Mn(2+). Residue lysine 282 is part of the active site. Positions 293, 352, and 354 each coordinate Mn(2+). Residue arginine 356 is part of the active site.

It belongs to the peptidase M17 family. Mn(2+) serves as cofactor.

The protein localises to the cytoplasm. It catalyses the reaction Release of an N-terminal amino acid, Xaa-|-Yaa-, in which Xaa is preferably Leu, but may be other amino acids including Pro although not Arg or Lys, and Yaa may be Pro. Amino acid amides and methyl esters are also readily hydrolyzed, but rates on arylamides are exceedingly low.. The catalysed reaction is Release of an N-terminal amino acid, preferentially leucine, but not glutamic or aspartic acids.. Functionally, presumably involved in the processing and regular turnover of intracellular proteins. Catalyzes the removal of unsubstituted N-terminal amino acids from various peptides. In Klebsiella pneumoniae (strain 342), this protein is Probable cytosol aminopeptidase.